The following is a 360-amino-acid chain: Phospho-N-acetylmuramoyl-pentapeptide-transferase (360 aa).

The next 10 helical transmembrane spans lie at 21-41 (YLTFRAIMSILTGLGFALWIG), 71-91 (TPTMGGIMILLSIFLSVILWA), 94-114 (SNPYVWVVLFVLVSFGTIGFI), 142-162 (LVVAFFLYATATTDAQTVLVV), 168-188 (IMPQLGLLFILMTYFVIVGAS), 199-219 (GLAIMPTVMVAAGFALIAWAT), 236-256 (ASELMVICTAIIGAGLGFLWF), 263-283 (VFMGDVGSLALGAILGIIAVL), 288-308 (FLLFIMGGVFVMETMSVILQV), and 338-358 (VIVRFWIITLVLVLLGLVTLK).

The protein belongs to the glycosyltransferase 4 family. MraY subfamily. The cofactor is Mg(2+).

It is found in the cell inner membrane. The catalysed reaction is UDP-N-acetyl-alpha-D-muramoyl-L-alanyl-gamma-D-glutamyl-meso-2,6-diaminopimeloyl-D-alanyl-D-alanine + di-trans,octa-cis-undecaprenyl phosphate = di-trans,octa-cis-undecaprenyl diphospho-N-acetyl-alpha-D-muramoyl-L-alanyl-D-glutamyl-meso-2,6-diaminopimeloyl-D-alanyl-D-alanine + UMP. It participates in cell wall biogenesis; peptidoglycan biosynthesis. In terms of biological role, catalyzes the initial step of the lipid cycle reactions in the biosynthesis of the cell wall peptidoglycan: transfers peptidoglycan precursor phospho-MurNAc-pentapeptide from UDP-MurNAc-pentapeptide onto the lipid carrier undecaprenyl phosphate, yielding undecaprenyl-pyrophosphoryl-MurNAc-pentapeptide, known as lipid I. This is Phospho-N-acetylmuramoyl-pentapeptide-transferase from Tolumonas auensis (strain DSM 9187 / NBRC 110442 / TA 4).